The sequence spans 273 residues: 3-keto-5-aminohexanoate cleavage enzyme (273 aa).

Glu14 contacts (5S)-5-amino-3-oxohexanoate. Positions 46 and 48 each coordinate Zn(2+). The (5S)-5-amino-3-oxohexanoate site is built by Ser82, Gly85, and Ser106. Glu227 is a binding site for Zn(2+).

This sequence belongs to the BKACE family. Kce subfamily. As to quaternary structure, homotetramer. The cofactor is Zn(2+).

It carries out the reaction (5S)-5-amino-3-oxohexanoate + acetyl-CoA = (3S)-3-aminobutanoyl-CoA + acetoacetate. It participates in amino-acid degradation; L-lysine degradation via acetate pathway. Involved in the anaerobic fermentation of lysine. Catalyzes the reversible reaction between 3-keto-5-aminohexanoate (KAH) and acetyl-CoA to form 3-aminobutyryl-CoA and acetoacetate. The reaction involves the deprotonation of KAH, the nucleophilic addition onto acetyl-CoA and the intramolecular transfer of the CoA moiety. This Acetoanaerobium sticklandii (strain ATCC 12662 / DSM 519 / JCM 1433 / CCUG 9281 / NCIMB 10654 / HF) (Clostridium sticklandii) protein is 3-keto-5-aminohexanoate cleavage enzyme.